The primary structure comprises 1111 residues: Zinc finger protein GLI1 (1111 aa).

The segment at 52–78 (GYGAARETSSCTEGSLFPPPPPPRSSV) is disordered. The interaction with SUFU stretch occupies residues 123–127 (SYGHL). 5 consecutive C2H2-type zinc fingers follow at residues 238 to 263 (TDCRWDGCSQEFDSQEQLVHHINSEH), 271 to 298 (FVCHWGGCSRELRPFKAQYMLVVHMRRH), 304 to 328 (HKCTFEGCRKSYSRLENLKTHLRSH), 334 to 359 (YMCEQEGCSKAFSNASDRAKHQNRTH), and 365 to 390 (YVCKLPGCTKRYTDPSSLRKHVKTVH). Residues 286 to 294 (KAQYMLVVH) form an interaction with DNA region. 2 interaction with DNA regions span residues 348–353 (ASDRAK) and 378–384 (DPSSLRK). The segment at 378–487 (DPSSLRKHVK…EDLSSLDEGP (110 aa)) is disordered. Over residues 416-431 (EPKREREGGSGREESR) the composition is skewed to basic and acidic residues. Residues 439 to 465 (MPQQSPGAQSSCSSDHSPAGSAANTDS) are compositionally biased toward polar residues. N6-acetyllysine is present on lysine 520. 4 disordered regions span residues 528-583 (GAPV…LPGL), 598-649 (ARGS…RAAD), 673-692 (TGRNFDPHHPTSVYSPQPPS), and 832-891 (PCLN…SSHS). Low complexity predominate over residues 546-562 (SSSSSMSSAYTVSRRSS). Residues 640-649 (RASDPARAAD) are compositionally biased toward basic and acidic residues. Pro residues predominate over residues 855–870 (LPQPQYPQSGPYPQPP). Lysine 1008 is covalently cross-linked (Glycyl lysine isopeptide (Lys-Gly) (interchain with G-Cter in SUMO2)). Residues 1064-1093 (LSPPLSHEQGDSSKNTPSPSGPPNMAVGNM) form a disordered region.

The protein belongs to the GLI C2H2-type zinc-finger protein family. Interacts with KIF7. Interacts with STK36. Interacts with ZIC1; the interaction enhances transcription activation. Interacts with SUFU; this inhibits transcriptional activation by GLI1. In terms of processing, phosphorylated in vitro by ULK3. Post-translationally, acetylation at Lys-520 down-regulates transcriptional activity. Deacetylated by HDAC1. Ubiquitinated by the CRL2(FEM1B) complex, suppressing GLI1 transcriptional activator activity.

It localises to the cytoplasm. It is found in the nucleus. Acts as a transcriptional activator. Binds to the DNA consensus sequence 5'-GACCACCCA-3'. Regulates the transcription of specific genes during normal development. Plays a role in craniofacial development and digital development, as well as development of the central nervous system and gastrointestinal tract. Mediates SHH signaling. Plays a role in cell proliferation and differentiation via its role in SHH signaling. The polypeptide is Zinc finger protein GLI1 (Gli1) (Mus musculus (Mouse)).